Here is a 117-residue protein sequence, read N- to C-terminus: Large ribosomal subunit protein uL18 (117 aa).

It belongs to the universal ribosomal protein uL18 family. Part of the 50S ribosomal subunit; part of the 5S rRNA/L5/L18/L25 subcomplex. Contacts the 5S and 23S rRNAs.

This is one of the proteins that bind and probably mediate the attachment of the 5S RNA into the large ribosomal subunit, where it forms part of the central protuberance. This chain is Large ribosomal subunit protein uL18, found in Thiobacillus denitrificans (strain ATCC 25259 / T1).